The following is a 250-amino-acid chain: tRNA (guanine-N(1)-)-methyltransferase (250 aa).

Residues G113 and 134 to 139 (IGDYVL) contribute to the S-adenosyl-L-methionine site.

This sequence belongs to the RNA methyltransferase TrmD family. As to quaternary structure, homodimer.

Its subcellular location is the cytoplasm. The enzyme catalyses guanosine(37) in tRNA + S-adenosyl-L-methionine = N(1)-methylguanosine(37) in tRNA + S-adenosyl-L-homocysteine + H(+). Functionally, specifically methylates guanosine-37 in various tRNAs. This is tRNA (guanine-N(1)-)-methyltransferase from Buchnera aphidicola subsp. Baizongia pistaciae (strain Bp).